Here is a 458-residue protein sequence, read N- to C-terminus: Cysteine protease ATG4C (458 aa).

An N-acetylmethionine modification is found at M1. Catalysis depends on C111, which acts as the Nucleophile. Residues D345 and H347 contribute to the active site. The residue at position 451 (S451) is a Phosphoserine. T452 carries the post-translational modification Phosphothreonine.

Belongs to the peptidase C54 family.

Its subcellular location is the cytoplasm. The catalysed reaction is [protein]-C-terminal L-amino acid-glycyl-phosphatidylethanolamide + H2O = [protein]-C-terminal L-amino acid-glycine + a 1,2-diacyl-sn-glycero-3-phosphoethanolamine. With respect to regulation, inhibited by N-ethylmaleimide. In terms of biological role, cysteine protease that plays a key role in autophagy by mediating both proteolytic activation and delipidation of ATG8 family proteins. The protease activity is required for proteolytic activation of ATG8 family proteins: cleaves the C-terminal amino acid of ATG8 proteins MAP1LC3 and GABARAPL2, to reveal a C-terminal glycine. Exposure of the glycine at the C-terminus is essential for ATG8 proteins conjugation to phosphatidylethanolamine (PE) and insertion to membranes, which is necessary for autophagy. In addition to the protease activity, also mediates delipidation of ATG8 family proteins. Catalyzes delipidation of PE-conjugated forms of ATG8 proteins during macroautophagy. Compared to ATG4B, the major protein for proteolytic activation of ATG8 proteins, shows weaker ability to cleave the C-terminal amino acid of ATG8 proteins, while it displays stronger delipidation activity. In contrast to other members of the family, weakly or not involved in phagophore growth during mitophagy. The chain is Cysteine protease ATG4C from Homo sapiens (Human).